The chain runs to 164 residues: Large ribosomal subunit protein uL10 (164 aa).

It belongs to the universal ribosomal protein uL10 family. In terms of assembly, part of the ribosomal stalk of the 50S ribosomal subunit. The N-terminus interacts with L11 and the large rRNA to form the base of the stalk. The C-terminus forms an elongated spine to which L12 dimers bind in a sequential fashion forming a multimeric L10(L12)X complex.

Its function is as follows. Forms part of the ribosomal stalk, playing a central role in the interaction of the ribosome with GTP-bound translation factors. In Chromobacterium violaceum (strain ATCC 12472 / DSM 30191 / JCM 1249 / CCUG 213 / NBRC 12614 / NCIMB 9131 / NCTC 9757 / MK), this protein is Large ribosomal subunit protein uL10.